We begin with the raw amino-acid sequence, 326 residues long: tRNA-modifying protein YgfZ (326 aa).

Residues tryptophan 27 and tryptophan 189 each contribute to the folate site.

This sequence belongs to the tRNA-modifying YgfZ family.

It localises to the cytoplasm. Folate-binding protein involved in regulating the level of ATP-DnaA and in the modification of some tRNAs. It is probably a key factor in regulatory networks that act via tRNA modification, such as initiation of chromosomal replication. This chain is tRNA-modifying protein YgfZ, found in Shigella dysenteriae serotype 1 (strain Sd197).